A 187-amino-acid polypeptide reads, in one-letter code: Phosphatidylethanolamine-binding protein 1 (187 aa).

At Ala2 the chain carries N-acetylalanine; in peptide hippocampal cholinergic neurostimulating. A Phosphoserine modification is found at Ser6. The residue at position 42 (Thr42) is a Phosphothreonine. Residues Ser51, Ser52, Ser54, Ser98, and Ser132 each carry the phosphoserine modification. The interaction with RAF1 stretch occupies residues Lys93–Asp134.

It belongs to the phosphatidylethanolamine-binding protein family. As to quaternary structure, has a tendency to form dimers by disulfide cross-linking. Interacts with RAF1 and this interaction is enhanced if RAF1 is phosphorylated on residues 'Ser-338', 'Ser-339', 'Tyr-340' and 'Tyr-341'. Interacts with ALOX15; in response to IL13/interleukin-13, prevents the interaction of PEBP1 with RAF1 to activate the ERK signaling cascade. In terms of tissue distribution, HCNP is expressed in brain. Increased expression in aged senescence-accelerated mice.

The protein resides in the cytoplasm. Binds ATP, opioids and phosphatidylethanolamine. Has lower affinity for phosphatidylinositol and phosphatidylcholine. Serine protease inhibitor which inhibits thrombin, neuropsin and chymotrypsin but not trypsin, tissue type plasminogen activator and elastase. Inhibits the kinase activity of RAF1 by inhibiting its activation and by dissociating the RAF1/MEK complex and acting as a competitive inhibitor of MEK phosphorylation. Its function is as follows. HCNP may be involved in the function of the presynaptic cholinergic neurons of the central nervous system. HCNP increases the production of choline acetyltransferase but not acetylcholinesterase. Seems to be mediated by a specific receptor. This is Phosphatidylethanolamine-binding protein 1 (Pebp1) from Mus musculus (Mouse).